The following is a 260-amino-acid chain: 3'-5' ssDNA/RNA exonuclease TatD (260 aa).

Residues E91, H127, and H152 each contribute to the a divalent metal cation site.

It belongs to the metallo-dependent hydrolases superfamily. TatD-type hydrolase family. TatD subfamily. Monomer. The cofactor is Mg(2+).

It is found in the cytoplasm. Functionally, 3'-5' exonuclease that prefers single-stranded DNA and RNA. May play a role in the H(2)O(2)-induced DNA damage repair. The sequence is that of 3'-5' ssDNA/RNA exonuclease TatD from Salmonella typhimurium (strain LT2 / SGSC1412 / ATCC 700720).